Consider the following 411-residue polypeptide: MDSDQGKLFVGGISWETDEDKLREHFTNYGEVSQAIVMRDKLTGRPRGFGFVIFSDPSVLDRVLQEKHSIDTREVDVKRAMSREEQQVSGRTGNLNTSRSSGGDAYNKTKKIFVGGLPPTLTDEEFRQYFEVYGPVTDVAIMYDQATNRPRGFGFVSFDSEDAVDSVLHKTFHDLSGKQVEVKRALPKDANPGGGGRSMGGGGSGGYQGYGGNESSYDGRMDSNRFLQHQSVGNGLPSYGSSGYGAGYGNGSNGAGYGAYGGYTGSAGGYGAGATAGYGATNIPGAGYGSSTGVAPRNSWDTPASSGYGNPGYGSGAAHSGYGVPGAAPPTQSPSGYSNQGYGYGGYSGSDSGYGNQAAYGVVGGRPSGGGSNNPGSGGYMGGGYGDGSWRSDPSQGYGGGYNDGQGRQGQ.

Residues 6 to 82 (GKLFVGGISW…REVDVKRAMS (77 aa)) enclose the RRM 1 domain. Disordered stretches follow at residues 81-103 (MSREEQQVSGRTGNLNTSRSSGG), 183-221 (KRALPKDANPGGGGRSMGGGGSGGYQGYGGNESSYDGRM), and 358-411 (AAYG…RQGQ). Positions 87–101 (QVSGRTGNLNTSRSS) are enriched in polar residues. In terms of domain architecture, RRM 2 spans 110–187 (KKIFVGGLPP…KQVEVKRALP (78 aa)). 3 stretches are compositionally biased toward gly residues: residues 192-212 (PGGGGRSMGGGGSGGYQGYGG), 362-387 (VVGGRPSGGGSNNPGSGGYMGGGYGD), and 397-411 (GYGGGYNDGQGRQGQ). Residues 341–390 (GYGYGGYSGSDSGYGNQAAYGVVGGRPSGGGSNNPGSGGYMGGGYGDGSW) are nuclear targeting sequence (M9).

As to quaternary structure, component of the spliceosome. Interacts with TRN1.

It is found in the nucleus. The protein resides in the cytoplasm. Functionally, involved with pre-mRNA processing. Forms complexes (ribonucleosomes) with at least 20 other different hnRNP and heterogeneous nuclear RNA in the nucleus. Its function is as follows. Involved in the packaging of pre-mRNA into hnRNP particles, transport of poly(A) mRNA from the nucleus to the cytoplasm and may modulate splice site selection. This is Heterogeneous nuclear ribonucleoprotein 1 (RNP1) from Arabidopsis thaliana (Mouse-ear cress).